A 1938-amino-acid polypeptide reads, in one-letter code: Autophagy-related protein 2 homolog A (1938 aa).

The Chorein N-terminal domain maps to 14–111 (ERVCRYLLHH…QLTLQPRRGP (98 aa)). Residues serine 765, serine 878, serine 892, serine 894, serine 1266, serine 1301, and serine 1309 each carry the phosphoserine modification. Positions 1242-1272 (DLHPPPRPPSPTEIAGQKLSESPASLPSCPP) are disordered. A disordered region spans residues 1315-1359 (LFPGERSGAPPPSPPVGGPAGSLGSCSEEKEDEREEEGDGDTLDS). Positions 1343–1359 (EKEDEREEEGDGDTLDS) are enriched in acidic residues. The WIPI-interacting stretch occupies residues 1358–1404 (DSDEFCILDAPGLGIPPRDGEPVVTQLHPGPIVVRDGYFSRPIGSTD). A Phosphoserine modification is found at serine 1402. 2 disordered regions span residues 1438–1476 (PHPG…GSGR) and 1614–1657 (GETS…PSPP). Residues 1446–1464 (TGLSGPRSSPSRCSGPNRP) are compositionally biased toward low complexity.

The protein belongs to the ATG2 family. In terms of assembly, interacts with ATG9A (via C-terminus). Interacts (via WIPI-interacting region) with WDR45B/WIPI3. Interacts (via WIPI-interacting region) with WDR45/WIPI4. Interacts with TMEM41B. Interacts with VMP1.

The protein localises to the preautophagosomal structure membrane. It is found in the lipid droplet. Its subcellular location is the endoplasmic reticulum membrane. The enzyme catalyses a 1,2-diacyl-sn-glycero-3-phospho-L-serine(in) = a 1,2-diacyl-sn-glycero-3-phospho-L-serine(out). The catalysed reaction is a 1,2-diacyl-sn-glycero-3-phosphoethanolamine(in) = a 1,2-diacyl-sn-glycero-3-phosphoethanolamine(out). In terms of biological role, lipid transfer protein involved in autophagosome assembly. Tethers the edge of the isolation membrane (IM) to the endoplasmic reticulum (ER) and mediates direct lipid transfer from ER to IM for IM expansion. Binds to the ER exit site (ERES), which is the membrane source for autophagosome formation, and extracts phospholipids from the membrane source and transfers them to ATG9 (ATG9A or ATG9B) to the IM for membrane expansion. Lipid transfer activity is enhanced by WIPI1 and WDR45/WIPI4, which promote ATG2A-association with phosphatidylinositol 3-monophosphate (PI3P)-containing membranes. Also regulates lipid droplets morphology and distribution within the cell. The polypeptide is Autophagy-related protein 2 homolog A (Homo sapiens (Human)).